The chain runs to 498 residues: ATP synthase subunit beta, chloroplastic (498 aa).

Residue 172-179 (GGAGVGKT) participates in ATP binding.

The protein belongs to the ATPase alpha/beta chains family. F-type ATPases have 2 components, CF(1) - the catalytic core - and CF(0) - the membrane proton channel. CF(1) has five subunits: alpha(3), beta(3), gamma(1), delta(1), epsilon(1). CF(0) has four main subunits: a(1), b(1), b'(1) and c(9-12).

It localises to the plastid. It is found in the chloroplast thylakoid membrane. It carries out the reaction ATP + H2O + 4 H(+)(in) = ADP + phosphate + 5 H(+)(out). In terms of biological role, produces ATP from ADP in the presence of a proton gradient across the membrane. The catalytic sites are hosted primarily by the beta subunits. This chain is ATP synthase subunit beta, chloroplastic, found in Calycanthus floridus var. glaucus (Eastern sweetshrub).